The primary structure comprises 819 residues: Regulator of G-protein signaling rgs-7 (819 aa).

Over residues 1 to 11 the composition is skewed to acidic residues; it reads MSDEDADEYDD. Disordered regions lie at residues 1–51, 112–135, and 149–259; these read MSDE…EMLW, GDDSSFRSRDRFVPPRRPRMGYGS, and SSTY…HNNE. Residues 32–44 show a composition bias toward polar residues; the sequence is YQDTTESTGPSEA. Positions 112–124 are enriched in basic and acidic residues; the sequence is GDDSSFRSRDRFV. Residues 149-166 show a composition bias toward low complexity; that stretch reads SSTYSSSSEAHRLSSLRA. Residues 173-185 show a composition bias toward polar residues; it reads QLTSTTTSFQPLS. Basic residues predominate over residues 213–223; sequence RMYRKNPKYRR. The span at 234-259 shows a compositional bias: basic and acidic residues; that stretch reads SRLEESTSQESERAVTPESWMEHNNE. The region spanning 290-429 is the C2 domain; the sequence is KHKDIRGIIF…KASQVVGDPF (140 aa). 2 disordered regions span residues 515–594 and 617–640; these read YRST…DDNG and FTFSPKHSSSKTNLRQLNGREEDK. Polar residues-rich tracts occupy residues 517 to 533, 559 to 568, and 617 to 632; these read STGSSDMRGRSTNNLLD, PSITTTTSEN, and FTFSPKHSSSKTNLRQ. Positions 682 to 800 constitute an RGS domain; it reads SFESLLNNKF…LRDRLFLDLL (119 aa).

Interacts with egl-30.

In terms of biological role, inhibits signal transduction by increasing the GTPase activity of G protein alpha subunit egl-30 (G-alpha(q)), thereby driving it into its inactive GDP-bound form. May organize egl-30 into a stable multiprotein signaling complex, and thereby persistently inhibit egl-30 when triggered by calcium or phospholipids. This Caenorhabditis elegans protein is Regulator of G-protein signaling rgs-7 (rgs-7).